Consider the following 247-residue polypeptide: ATP synthase subunit a, chloroplastic (247 aa).

5 consecutive transmembrane segments (helical) span residues 38–58 (QVLITSWVVIAILLGSAAIAV), 95–115 (VPFIGTMFLFIFVSNWSGALL), 134–154 (INTTVALALLTSVAYFYAGLT), 199–219 (LVVVVLVSLVPLVVPIPVMFL), and 220–240 (GLFTSGIQALIFATLAAAYIG).

It belongs to the ATPase A chain family. F-type ATPases have 2 components, CF(1) - the catalytic core - and CF(0) - the membrane proton channel. CF(1) has five subunits: alpha(3), beta(3), gamma(1), delta(1), epsilon(1). CF(0) has four main subunits: a, b, b' and c.

Its subcellular location is the plastid. The protein localises to the chloroplast thylakoid membrane. Its function is as follows. Key component of the proton channel; it plays a direct role in the translocation of protons across the membrane. The polypeptide is ATP synthase subunit a, chloroplastic (atpI) (Spinacia oleracea (Spinach)).